We begin with the raw amino-acid sequence, 421 residues long: Serine hydroxymethyltransferase (421 aa).

Residues L121 and 125 to 127 (GHL) each bind (6S)-5,6,7,8-tetrahydrofolate. At K229 the chain carries N6-(pyridoxal phosphate)lysine.

It belongs to the SHMT family. In terms of assembly, homodimer. The cofactor is pyridoxal 5'-phosphate.

The protein resides in the cytoplasm. It carries out the reaction (6R)-5,10-methylene-5,6,7,8-tetrahydrofolate + glycine + H2O = (6S)-5,6,7,8-tetrahydrofolate + L-serine. Its pathway is one-carbon metabolism; tetrahydrofolate interconversion. The protein operates within amino-acid biosynthesis; glycine biosynthesis; glycine from L-serine: step 1/1. In terms of biological role, catalyzes the reversible interconversion of serine and glycine with tetrahydrofolate (THF) serving as the one-carbon carrier. This reaction serves as the major source of one-carbon groups required for the biosynthesis of purines, thymidylate, methionine, and other important biomolecules. Also exhibits THF-independent aldolase activity toward beta-hydroxyamino acids, producing glycine and aldehydes, via a retro-aldol mechanism. The sequence is that of Serine hydroxymethyltransferase from Haemophilus influenzae (strain PittGG).